We begin with the raw amino-acid sequence, 51 residues long: Large ribosomal subunit protein bL33 (51 aa).

The protein belongs to the bacterial ribosomal protein bL33 family.

In Pseudomonas putida (strain ATCC 47054 / DSM 6125 / CFBP 8728 / NCIMB 11950 / KT2440), this protein is Large ribosomal subunit protein bL33.